A 728-amino-acid chain; its full sequence is Diacylglycerol kinase 1 (728 aa).

The helical transmembrane segment at 27–48 (GLMFSCFVAALVGILTIAYTAF) threads the bilayer. 2 consecutive Phorbol-ester/DAG-type zinc fingers follow at residues 79–137 (PHSW…PKDC) and 149–212 (VHQW…GDIC). Disordered regions lie at residues 265–296 (KQTNETSADTGNSGSNCDESTESTADTGPTVN) and 308–336 (VMNGDSSNGDSDSNGKLEKKPSVKRTGSF). Positions 267–294 (TNETSADTGNSGSNCDESTESTADTGPT) are enriched in polar residues. Positions 310 to 319 (NGDSSNGDSD) are enriched in low complexity. Residues 357 to 496 (SDARPLLVFI…LDRWKVSILN (140 aa)) enclose the DAGKc domain. Glycyl lysine isopeptide (Lys-Gly) (interchain with G-Cter in ubiquitin) cross-links involve residues Lys-491 and Lys-500.

It belongs to the eukaryotic diacylglycerol kinase family. Monomer. In terms of tissue distribution, expressed in roots, shoots, and leaves.

The protein resides in the membrane. The catalysed reaction is a 1,2-diacyl-sn-glycerol + ATP = a 1,2-diacyl-sn-glycero-3-phosphate + ADP + H(+). Its function is as follows. Phosphorylates the second messenger diacylglycerol (DAG) to generate phosphatidic acid (PA), another important signaling molecule. PA is required for plant development and responses to abiotic stress and pathogen attack. May be involved in the accumulation of PA during cold stress. The chain is Diacylglycerol kinase 1 (DGK1) from Arabidopsis thaliana (Mouse-ear cress).